We begin with the raw amino-acid sequence, 162 residues long: Glycine cleavage system H protein, mitochondrial (162 aa).

The transit peptide at 1–31 directs the protein to the mitochondrion; it reads MALRIWASSTANALRLSSATRPHFSPLSRCF. The Lipoyl-binding domain maps to 53–135; sequence VATIGITDHA…YEDGWMIKVK (83 aa). At Lys94 the chain carries N6-lipoyllysine.

This sequence belongs to the GcvH family. In terms of assembly, the glycine cleavage system is composed of four proteins: P, T, L and H. It depends on (R)-lipoate as a cofactor.

Its subcellular location is the mitochondrion. In terms of biological role, the glycine cleavage system catalyzes the degradation of glycine. The H protein shuttles the methylamine group of glycine from the P protein to the T protein. The protein is Glycine cleavage system H protein, mitochondrial (GDCSH) of Flaveria pringlei.